A 124-amino-acid polypeptide reads, in one-letter code: Vitelline membrane protein Vm32E (124 aa).

The signal sequence occupies residues 1–19 (MKTVAFLAVVVLFAAFACA). The 40-residue stretch at 42–81 (SVPAPPCPKNYLFSCQPNLVPAPCAQQAAPAAYGSAGAYT) folds into the VM domain.

It belongs to the vitelline membrane family.

Its subcellular location is the secreted. Major early eggshell protein. This Drosophila pseudoobscura pseudoobscura (Fruit fly) protein is Vitelline membrane protein Vm32E.